Reading from the N-terminus, the 250-residue chain is uncharacterized protein (250 aa).

An ABC transporter domain is found at 7-244; sequence LKVEDLHVYR…YKKECGKCYK (238 aa). Residue 39-46 participates in ATP binding; sequence GPNGAGKS.

Belongs to the ABC transporter superfamily.

This is an uncharacterized protein from Methanocaldococcus jannaschii (strain ATCC 43067 / DSM 2661 / JAL-1 / JCM 10045 / NBRC 100440) (Methanococcus jannaschii).